A 215-amino-acid chain; its full sequence is Ribose-5-phosphate isomerase A (215 aa).

Substrate is bound by residues 26–29 (TGST), 79–82 (DGAD), and 92–95 (KGGG). The Proton acceptor role is filled by glutamate 101. Residue lysine 119 participates in substrate binding.

The protein belongs to the ribose 5-phosphate isomerase family. Homodimer.

The catalysed reaction is aldehydo-D-ribose 5-phosphate = D-ribulose 5-phosphate. It functions in the pathway carbohydrate degradation; pentose phosphate pathway; D-ribose 5-phosphate from D-ribulose 5-phosphate (non-oxidative stage): step 1/1. Catalyzes the reversible conversion of ribose-5-phosphate to ribulose 5-phosphate. This chain is Ribose-5-phosphate isomerase A, found in Xylella fastidiosa (strain 9a5c).